The chain runs to 578 residues: MAFMEKPPAGKVLLDDTVPLTAAIEASQSLQSHTEYIIRVQRGISVENSWQIVRRYSDFDLLNNSLQIAGLSLPLPPKKLIGNMDREFIAERQKGLQNYLNVITTNHILSNCELVKKFLDPNNYSANYTEIALQQVSMFFRSEPKWEVVEPLKDIGWRIRKKYFLMKIKNQPKERLVLSWADLGPDKYLSDKDFQCLIKLLPSCLHPYIYRVTFATANESSALLIRMFNEKGTLKDLIYKAKPKDPFLKKYCNPKKIQGLELQQIKTYGRQILEVLKFLHDKGFPYGHLHASNVMLDGDTCRLLDLENSLLGLPSFYRSYFSQFRKINTLESVDVHCFGHLLYEMTYGRPPDSVPVDSFPPAPSMAVVAVLESTLSCEACKNGMPTISRLLQMPLFSDVLLTTSEKPQFKIPTKLKEALRIAKECIEKRLIEEQKQIHQHRRLTRAQSHHGSEEERKKRKILARKKSKRSALENSEEHSAKYSNSNNSAGSGASSPLTSPSSPTPPSTSGISALPPPPPPPPPPAAPLPPASTEAPAQLSSQAVNGMSRGALLSSIQNFQKGTLRKAKTCDHSAPKIG.

Positions 14 to 126 constitute a PX domain; it reads LDDTVPLTAA…KFLDPNNYSA (113 aa). The Protein kinase domain maps to 88 to 481; sequence FIAERQKGLQ…LENSEEHSAK (394 aa). Composition is skewed to basic residues over residues 437–448 and 457–469; these read IHQHRRLTRAQS and KKRK…KSKR. Disordered stretches follow at residues 437 to 548 and 559 to 578; these read IHQH…NGMS and FQKG…PKIG. The span at 483-513 shows a compositional bias: low complexity; that stretch reads SNSNNSAGSGASSPLTSPSSPTPPSTSGISA. Residues 514-530 are compositionally biased toward pro residues; it reads LPPPPPPPPPPAAPLPP. The region spanning 548 to 567 is the WH2 domain; it reads SRGALLSSIQNFQKGTLRKA. Residues 568-578 show a composition bias toward basic and acidic residues; it reads KTCDHSAPKIG.

The protein belongs to the protein kinase superfamily. In terms of tissue distribution, widely expressed in all tissues examined except in heart. Isoform 1 is expressed in high levels in the brain, skeletal muscle, spleen and testis. Isoform 7 expression has yet to be demonstrated.

It is found in the cytoplasm. The protein resides in the cell membrane. Functionally, binds to and modulates brain Na,K-ATPase subunits ATP1B1 and ATP1B3 and may thereby participate in the regulation of electrical excitability and synaptic transmission. May not display kinase activity. This Homo sapiens (Human) protein is PX domain-containing protein kinase-like protein.